The primary structure comprises 336 residues: MSQAVQTNGTQPLSKTWELSLYELQRTPQEAITDGLEIVVSPRSLHSELMCPICLDMLKNTMTTKECLHRFCADCIITALRSGNKECPTCRKKLVSKRSLRPDPNFDALISKIYPSRDEYEAHQERVLARINKHNNQQALSHSIEEGLKIQAMNRLQRGKKQQIENGSGAEDNGDSSHCSNASTHSNQEAGPSNKRTKTSDDSGLEPDNNNAAMAIDPVMDGASEIELVFRPHPTLMEKDDSAQTRYIKTSGNATVDHLSKYLAVRLALEELRSKGESNQMNLDTASEKQYTIYIATASGQFTVLNGSFSLELVSEKYWKVNKPMELYYAPTKEHK.

At serine 2 the chain carries N-acetylserine. Positions 2–179 (SQAVQTNGTQ…AEDNGDSSHC (178 aa)) are interaction with HIP2. Serine 41 carries the post-translational modification Phosphoserine. The RING-type zinc finger occupies 51-91 (CPICLDMLKNTMTTKECLHRFCADCIITALRSGNKECPTCR). The interaction with nucleosomes via an acidic patch on histone H2A and histone H2B stretch occupies residues 93–98 (KLVSKR). Lysine 112 is covalently cross-linked (Glycyl lysine isopeptide (Lys-Gly) (interchain with G-Cter in ubiquitin)). Phosphoserine is present on residues serine 143 and serine 168. A disordered region spans residues 157–213 (QRGKKQQIENGSGAEDNGDSSHCSNASTHSNQEAGPSNKRTKTSDDSGLEPDNNNAA). The segment covering 176–191 (SSHCSNASTHSNQEAG) has biased composition (polar residues). Residues lysine 249 and lysine 323 each participate in a glycyl lysine isopeptide (Lys-Gly) (interchain with G-Cter in SUMO2) cross-link.

As to quaternary structure, component of chromatin-associated Polycomb (PcG) complexes. Component of a number of PRC1-like complexes; these complexes contain either the polycomb group ring finger protein PCGF1, or PCGF2, or PCGF3, or BMI1, or PCGF5, or PCGF6. Distinct PRC1-like complexes are composed of a RING1 subunit (RING1B or RING1A), one of the six PCGF proteins (PCGF1, PCGF2, PCGF3, BMI1, PCGF5 or PCGF6), one PHC protein (PHC1, PHC2 or PHC3) and one of the CBX proteins (CBX2, CBX4, CBX6, CBX7 or CBX8). Part of a complex that contains RNF2, UB2D3 and BMI1; within that complex RNF2 and BMI1 form a tight heterodimer, where UB2D3 interacts only with RNF2. The complex composed of RNF2, UB2D3 and BMI1 binds nucleosomes, and has activity only with nucleosomal histone H2A. Part of a complex that contains PCGF5, RNF2 and UBE2D3. Part of a complex that contains AUTS2, PCGF5, RNF2, CSNK2B and RYBP. Interacts with CBX6 and CBX8. Interacts with PHC1, PCGF2, RYBP, CBX7, CBX4, CBX2, RNF1/RING1, BMI1 and PHC2. Interaction with RYBP and CBX7 is mutually exclusive; both compete for the same binding site on RNF2. Component of repressive BCOR complex containing a Polycomb group subcomplex at least composed of RYBP, PCGF1, BCOR and RING1. Interacts with CBX2 and PHC1. Interacts with CHTOP. Interacts with AURKB. Part of the E2F6.com-1 complex in G0 phase composed of E2F6, MGA, MAX, TFDP1, CBX3, BAT8, EUHMTASE1, RNF1/RING1, RNF2/RING2, MBLR, L3MBTL2 and YAF2. Component of some MLL1/MLL complex, at least composed of the core components KMT2A/MLL1, ASH2L, HCFC1/HCF1, WDR5 and RBBP5, as well as the facultative components BACC1, CHD8, E2F6, HSP70, INO80C, KANSL1, LAS1L, MAX, MCRS1, MGA, MYST1/MOF, PELP1, PHF20, PRP31, RING2, RUVB1/TIP49A, RUVB2/TIP49B, SENP3, TAF1, TAF4, TAF6, TAF7, TAF9 and TEX10. Interacts with RYBP, HIP2 and TFCP2. Interacts with NUPR1. Interacts with SAMD7 in a PHC2-dependent manner. Post-translationally, monoubiquitinated, by auto-ubiquitination. Polyubiquitinated in the presence of UBE2D3 (in vitro).

Its subcellular location is the nucleus. The protein localises to the cytoplasm. The protein resides in the chromosome. The catalysed reaction is S-ubiquitinyl-[E2 ubiquitin-conjugating enzyme]-L-cysteine + [acceptor protein]-L-lysine = [E2 ubiquitin-conjugating enzyme]-L-cysteine + N(6)-ubiquitinyl-[acceptor protein]-L-lysine.. Its pathway is protein modification; protein ubiquitination. Its function is as follows. E3 ubiquitin-protein ligase that mediates monoubiquitination of 'Lys-119' of histone H2A (H2AK119Ub), thereby playing a central role in histone code and gene regulation. H2AK119Ub gives a specific tag for epigenetic transcriptional repression and participates in X chromosome inactivation of female mammals. May be involved in the initiation of both imprinted and random X inactivation. Essential component of a Polycomb group (PcG) multiprotein PRC1-like complex, a complex class required to maintain the transcriptionally repressive state of many genes, including Hox genes, throughout development. PcG PRC1 complex acts via chromatin remodeling and modification of histones, rendering chromatin heritably changed in its expressibility. E3 ubiquitin-protein ligase activity is enhanced by BMI1/PCGF4. Acts as the main E3 ubiquitin ligase on histone H2A of the PRC1 complex, while RING1 may rather act as a modulator of RNF2/RING2 activity. Plays a role in the transcriptional repression of genes that are required for pluripotency in embryonic stem cells, thereby contributing to differentiation of the ectodermal and endodermal germ layers. Association with the chromosomal DNA is cell-cycle dependent. In resting B- and T-lymphocytes, interaction with AURKB leads to block its activity, thereby maintaining transcription in resting lymphocytes. Also acts as a negative regulator of autophagy by mediating ubiquitination of AMBRA1, leading to its subsequent degradation. The sequence is that of E3 ubiquitin-protein ligase RING2 (RNF2) from Pongo abelii (Sumatran orangutan).